The sequence spans 419 residues: Tetraspanning orphan receptor (419 aa).

Topologically, residues 1–28 are cytoplasmic; it reads MPRAPALLTNDARHQFTCCLCLHVRTGT. A helical transmembrane segment spans residues 29-49; sequence IIFGITQIIIQLVFISFLFLM. The Extracellular segment spans residues 50–165; sequence TFNPRLIPED…EVKIKHFSPY (116 aa). A helical transmembrane segment spans residues 166-186; the sequence is IAVCVTTFSLAFCCFMVHGAI. The Cytoplasmic portion of the chain corresponds to 187–193; the sequence is TKQPTHL. A helical membrane pass occupies residues 194–214; that stretch reads LPFFFIQVFDLIICLIHILGF. Over 215–240 the chain is Extracellular; sequence MSSTSDLRLMIHTKTGPIYIKSTGFT. The helical transmembrane segment at 241–261 threads the bilayer; it reads FIILSISCMMLAFKAYCLGMV. The Cytoplasmic segment spans residues 262-419; sequence WDCYKYLMLN…SAPSNAHSSC (158 aa). The segment covering 303 to 316 has biased composition (low complexity); sequence NNSIGNSGSPNEPN. A disordered region spans residues 303–328; that stretch reads NNSIGNSGSPNEPNTRPRPEPITYDP.

In terms of assembly, interacts (via N-terminal extracellular domain) with human C2a. Phosphorylated on tyrosine residues.

Its subcellular location is the cell membrane. In terms of biological role, cell surface receptor that binds to human complement C2a protein. This results in inhibition of the classical and lectin pathways of complement activation, probably due to interference with binding of C2a to C4b and interference with cleavage by C1 or MASP2 such that C3 convertase cannot be formed. This infers resistance to complement-mediated cell lysis, allowing parasite survival and infection. The protein is Tetraspanning orphan receptor of Schistosoma mansoni (Blood fluke).